The following is a 146-amino-acid chain: Core protein D2 (146 aa).

The protein belongs to the orthopoxvirus OPG114 family. As to quaternary structure, part of a complex composed of the kinase OPG054, OPG092, OPG100, OPG114, OPG115, OPG142 and OPG157.

It localises to the virion. Functionally, late protein which is part of a large complex required for early virion morphogenesis. This complex participates in the formation of virosomes and the incorporation of virosomal contents into nascent immature virions. This is Core protein D2 (OPG114) from Homo sapiens (Human).